A 132-amino-acid chain; its full sequence is Small ribosomal subunit protein uS11 (132 aa).

A compositionally biased stretch (basic residues) spans 1-16 (MAAGMKGKRSRRRKER). The interval 1–20 (MAAGMKGKRSRRRKERKNVE) is disordered.

It belongs to the universal ribosomal protein uS11 family. As to quaternary structure, part of the 30S ribosomal subunit. Interacts with proteins S7 and S18. Binds to IF-3.

Located on the platform of the 30S subunit, it bridges several disparate RNA helices of the 16S rRNA. Forms part of the Shine-Dalgarno cleft in the 70S ribosome. The chain is Small ribosomal subunit protein uS11 from Clostridium botulinum (strain Kyoto / Type A2).